Here is a 547-residue protein sequence, read N- to C-terminus: MQHNTYIYILTMKLLGFALAILLVVATCKPEEEITCEENVPFTCSQTDRFNKQDFESDFIFGVASSAYQIEGGRGRGLNVWDGFTHRYPEKGGADLGNGDTTCDSYRTWQKDLDVMEELGVKGYRFSFAWSRILPKGKRSRGINEDGINYYSGLIDGLIARNITPFVTLFHWDLPQSLQDEYEGFLDRTIIDDFKDYADLCFERFGDRVKHWITINQLFTVPTRGYALGTDAPGRCSQWVDKRCYGGDSSTEPYIVAHNQLLAHATVVDLYRTRYKYQGGKIGPVMITRWFLPYDDTLESKQATWRAKEFFLGWFMEPLTKGKYPYIMRKLVGNRLPKFNSTEARLLKGSYDFLGLNYYVTQYAHALDPSPPEKLTAMTDSLANLTSLDANGQPPGPPFSKGSYYHPRGMLNVMEHFKTKYGDPLIYVTENGFSTSGGPIPFTEAFHDYNRIDYLCSHLCFLRKAIKEKRVNVKGYFVWSLGDNYEFCNGYTVRFGLSYVDFNNVTADRDLKASGLWYQSFLRDTTKNQDILRSSLPFKNGDRKSLT.

Positions 1-28 (MQHNTYIYILTMKLLGFALAILLVVATC) are cleaved as a signal peptide. Cystine bridges form between C36–C460, C44–C456, and C236–C244. A beta-D-glucoside is bound by residues Q69, H171, and 216-217 (NQ). The N-linked (GlcNAc...) asparagine glycan is linked to N340. Y359 is an a beta-D-glucoside binding site. N-linked (GlcNAc...) asparagine glycosylation is present at N384. A beta-D-glucoside contacts are provided by residues E430, W479, 486 to 487 (EF), and F495. Residue E430 is the Nucleophile of the active site. N504 carries N-linked (GlcNAc...) asparagine glycosylation.

Belongs to the glycosyl hydrolase 1 family. In terms of assembly, interacts with MVP1. In terms of tissue distribution, expressed in phloem-associated cells.

The enzyme catalyses a thioglucoside + H2O = a sugar + a thiol.. Its function is as follows. May degrade glucosinolates (glucose residue linked by a thioglucoside bound to an amino acid derivative) to glucose, sulfate and any of the products: thiocyanates, isothiocyanates, nitriles, epithionitriles or oxazolidine-2-thiones. These toxic degradation products can deter insect herbivores. Seems to function in abscisic acid (ABA) and methyl jasmonate (MeJA) signaling in guard cells. Functionally redundant with TGG1. The chain is Myrosinase 2 from Arabidopsis thaliana (Mouse-ear cress).